The primary structure comprises 218 residues: MGQKINPLGFRLGTTQGHHSLWFTQAKNYSEGLQEDQQIRNCIKNYVQKNTKISSGVEGIARIEIQKRIDLIQVIIFMGFPKPLLENQPRGIEELQTNLQKKCNSVNRKFNIAITKIAKPYGNPNILAEYIAGQLKNRVSFRKAMKKAIELTEQANTKGIQVQIAGRIDGKEIARVEWIRRGRVPLQTIRAKIDYCSYTVRTIYGVLGIKIWIFIDEE.

A KH type-2 domain is found at 43–118 (IKNYVQKNTK…KFNIAITKIA (76 aa)).

Belongs to the universal ribosomal protein uS3 family. As to quaternary structure, part of the 30S ribosomal subunit.

The protein resides in the plastid. Its subcellular location is the chloroplast. This is Small ribosomal subunit protein uS3c (rps3) from Coffea arabica (Arabian coffee).